The primary structure comprises 258 residues: Transmembrane O-methyltransferase homolog (258 aa).

S-adenosyl-L-methionine contacts are provided by residues Glu104, 106–107, Ser112, Glu130, and Ser160; that span reads GT.

This sequence belongs to the class I-like SAM-binding methyltransferase superfamily. Cation-dependent O-methyltransferase family. As to quaternary structure, interacts with LHFPL5, PCDH15, TMC1, TMC2 and TMIE. The interaction of TOMT with TMC1 and TMC2 is required for the transportation of TMC1/2 into the stereocilia of hair cells. Interacts directly with TMC1. As to expression, widely expressed with high levels in outer and inner hair cells of the cochlea and vestibule.

Its subcellular location is the cytoplasm. The protein localises to the endoplasmic reticulum. The catalysed reaction is a catechol + S-adenosyl-L-methionine = a guaiacol + S-adenosyl-L-homocysteine + H(+). Catalyzes the O-methylation, and thereby the inactivation, of catecholamine neurotransmitters and catechol hormones. Required for auditory function. Component of the cochlear hair cell's mechanotransduction (MET) machinery. Involved in the assembly of the asymmetric tip-link MET complex. Required for transportation of TMC1 and TMC2 proteins into the mechanically sensitive stereocilia of the hair cells. The function in MET is independent of the enzymatic activity. The polypeptide is Transmembrane O-methyltransferase homolog (Mus musculus (Mouse)).